A 274-amino-acid chain; its full sequence is 2,3,4,5-tetrahydropyridine-2,6-dicarboxylate N-succinyltransferase (274 aa).

Residues R104 and D141 each contribute to the substrate site.

Belongs to the transferase hexapeptide repeat family. As to quaternary structure, homotrimer.

It is found in the cytoplasm. It carries out the reaction (S)-2,3,4,5-tetrahydrodipicolinate + succinyl-CoA + H2O = (S)-2-succinylamino-6-oxoheptanedioate + CoA. It participates in amino-acid biosynthesis; L-lysine biosynthesis via DAP pathway; LL-2,6-diaminopimelate from (S)-tetrahydrodipicolinate (succinylase route): step 1/3. The sequence is that of 2,3,4,5-tetrahydropyridine-2,6-dicarboxylate N-succinyltransferase from Yersinia enterocolitica serotype O:8 / biotype 1B (strain NCTC 13174 / 8081).